The primary structure comprises 467 residues: Cobyrinate a,c-diamide synthase (467 aa).

Residues 256-449 (RVGYAADQAF…AHIHVEGAPE (194 aa)) enclose the GATase cobBQ-type domain. The active-site Nucleophile is C338.

This sequence belongs to the CobB/CbiA family. The cofactor is Mg(2+).

It carries out the reaction cob(II)yrinate + 2 L-glutamine + 2 ATP + 2 H2O = cob(II)yrinate a,c diamide + 2 L-glutamate + 2 ADP + 2 phosphate + 2 H(+). It participates in cofactor biosynthesis; adenosylcobalamin biosynthesis; cob(II)yrinate a,c-diamide from sirohydrochlorin (anaerobic route): step 10/10. In terms of biological role, catalyzes the ATP-dependent amidation of the two carboxylate groups at positions a and c of cobyrinate, using either L-glutamine or ammonia as the nitrogen source. The sequence is that of Cobyrinate a,c-diamide synthase from Magnetococcus marinus (strain ATCC BAA-1437 / JCM 17883 / MC-1).